The chain runs to 84 residues: Small ribosomal subunit protein bS18 (84 aa).

The protein belongs to the bacterial ribosomal protein bS18 family. Part of the 30S ribosomal subunit. Forms a tight heterodimer with protein bS6.

Its function is as follows. Binds as a heterodimer with protein bS6 to the central domain of the 16S rRNA, where it helps stabilize the platform of the 30S subunit. This is Small ribosomal subunit protein bS18 from Clostridium kluyveri (strain NBRC 12016).